A 166-amino-acid chain; its full sequence is 3-isopropylmalate dehydratase small subunit 1 (166 aa).

This sequence belongs to the LeuD family. LeuD type 2 subfamily. As to quaternary structure, heterodimer of LeuC and LeuD.

It carries out the reaction (2R,3S)-3-isopropylmalate = (2S)-2-isopropylmalate. It functions in the pathway amino-acid biosynthesis; L-leucine biosynthesis; L-leucine from 3-methyl-2-oxobutanoate: step 2/4. In terms of biological role, catalyzes the isomerization between 2-isopropylmalate and 3-isopropylmalate, via the formation of 2-isopropylmaleate. This chain is 3-isopropylmalate dehydratase small subunit 1 (leuD1), found in Thermotoga maritima (strain ATCC 43589 / DSM 3109 / JCM 10099 / NBRC 100826 / MSB8).